We begin with the raw amino-acid sequence, 89 residues long: Elongation factor 1-beta (89 aa).

The protein belongs to the EF-1-beta/EF-1-delta family.

Functionally, promotes the exchange of GDP for GTP in EF-1-alpha/GDP, thus allowing the regeneration of EF-1-alpha/GTP that could then be used to form the ternary complex EF-1-alpha/GTP/AAtRNA. The protein is Elongation factor 1-beta of Methanococcus maripaludis (strain C6 / ATCC BAA-1332).